The chain runs to 72 residues: DNA-directed RNA polymerase subunit epsilon (72 aa).

The protein belongs to the RNA polymerase subunit epsilon family. In terms of assembly, RNAP is composed of a core of 2 alpha, a beta and a beta' subunit. The core is associated with a delta subunit, and at least one of epsilon or omega. When a sigma factor is associated with the core the holoenzyme is formed, which can initiate transcription.

The enzyme catalyses RNA(n) + a ribonucleoside 5'-triphosphate = RNA(n+1) + diphosphate. A non-essential component of RNA polymerase (RNAP). The protein is DNA-directed RNA polymerase subunit epsilon of Lactiplantibacillus plantarum (strain ATCC BAA-793 / NCIMB 8826 / WCFS1) (Lactobacillus plantarum).